Consider the following 847-residue polypeptide: Rho GTPase-activating protein 12 (847 aa).

Residues 12–74 (PGQAYIEVEY…PAQYVKEVTR (63 aa)) form the SH3 domain. The interval 110–241 (LPELSSFGKP…PPNQGRPDSP (132 aa)) is disordered. 2 stretches are compositionally biased toward polar residues: residues 117–174 (GKPS…QNRT) and 191–200 (TSFSQEQSCD). Serine 165 carries the post-translational modification Phosphoserine. Residues serine 201, serine 213, and serine 215 each carry the phosphoserine modification. Positions 224 to 234 (TEQIRATTPPN) are enriched in polar residues. Phosphothreonine occurs at positions 230 and 231. Serine 240 carries the post-translational modification Phosphoserine. Tyrosine 243 carries the post-translational modification Phosphotyrosine. 2 consecutive WW domains span residues 265–298 (IQIN…PPRW) and 358–391 (DYTN…LPKY). A disordered region spans residues 293–317 (WKPPRWTRDASISKGDFQSPGDQEL). Disordered regions lie at residues 428–466 (DTND…DQEK) and 591–625 (PDSP…SEQK). A compositionally biased stretch (polar residues) spans 445 to 461 (NESSPSSPKHQDTASSP). Residues 463–575 (DQEKYGLLNV…WFKVLSSTIN (113 aa)) enclose the PH domain. Serine 593 carries the phosphoserine modification. Basic and acidic residues predominate over residues 595–610 (GIEKHDKEKEQKDPKK). The 189-residue stretch at 657–845 (SNLANLCQRE…LILLELSSIF (189 aa)) folds into the Rho-GAP domain.

Functionally, GTPase activator for the Rho-type GTPases by converting them to an inactive GDP-bound state. This chain is Rho GTPase-activating protein 12 (ARHGAP12), found in Macaca fascicularis (Crab-eating macaque).